A 211-amino-acid polypeptide reads, in one-letter code: Large ribosomal subunit protein uL4 (211 aa).

Residues 40–80 (QQAHSRQGTASTLTRSEVRGGGRKPYKQKGTGRARQGSIRT) form a disordered region. The span at 41 to 54 (QAHSRQGTASTLTR) shows a compositional bias: polar residues. Positions 60-71 (GGRKPYKQKGTG) are enriched in basic residues.

Belongs to the universal ribosomal protein uL4 family. Part of the 50S ribosomal subunit.

Its function is as follows. One of the primary rRNA binding proteins, this protein initially binds near the 5'-end of the 23S rRNA. It is important during the early stages of 50S assembly. It makes multiple contacts with different domains of the 23S rRNA in the assembled 50S subunit and ribosome. In terms of biological role, forms part of the polypeptide exit tunnel. The chain is Large ribosomal subunit protein uL4 from Prochlorococcus marinus (strain MIT 9211).